A 43-amino-acid chain; its full sequence is Subtilosin-A (43 aa).

Residues 1–8 constitute a propeptide that is removed on maturation; the sequence is MKKAVIVE. A cross-link (cyclopeptide (Asn-Gly)) is located at residues 9 to 43; that stretch reads NKGCATCSIGAACLVDGPIPDFEIAGATGLFGLWG. A cross-link (2-cysteinyl-D-phenylalanine (Cys-Phe)) is located at residues 12–39; the sequence is CATCSIGAACLVDGPIPDFEIAGATGLF. The segment at residues 15 to 36 is a cross-link (2-cysteinyl-D-allo-threonine (Cys-Thr)); sequence CSIGAACLVDGPIPDFEIAGAT. A cross-link (2-cysteinyl-L-phenylalanine (Cys-Phe)) is located at residues 21-30; sequence CLVDGPIPDF.

Belongs to the bacteriocin class V family. In terms of processing, this sactipeptide undergoes unique processing steps that include proteolytic cleavage after Glu-8, and covalent linkage of the alpha-amino of Asn-9 with the carboxyl of Gly-43 to form a cyclopeptide. Thioether cross-links are formed between cysteines and the alpha-carbons of other amino acids, Cys-12 to Phe-39, Cys-15 to Thr-36, and Cys-21 to Phe-30. In forming these cross-links, Thr-36 and Phe-39 are converted to D-amino acids. Propeptide cleavage and cyclopeptide formation only occur after all 3 thioether cross-links are formed.

It is found in the secreted. Has bacteriocidal activity against some Gram-positive bacteria such as Listeria, some species of Bacillus and E.faecium. A single mutation (Thr-14-Ile) confers hemolytic activity against rabbit and human blood. This chain is Subtilosin-A (sboA), found in Bacillus subtilis (strain 168).